The chain runs to 106 residues: Cell division protein FtsB (106 aa).

The Cytoplasmic portion of the chain corresponds to 1–3 (MRL). The helical transmembrane segment at 4-21 (LTLIFVALIALLQYPLWL) threads the bilayer. Residues 22-106 (GKGSWLRVWD…SPPAALTGAQ (85 aa)) are Periplasmic-facing. A coiled-coil region spans residues 31–73 (DLNQKIVAQKAVNAELKLRNDTLDAEVRDLKQGNAAIEERARS).

It belongs to the FtsB family. As to quaternary structure, part of a complex composed of FtsB, FtsL and FtsQ.

Its subcellular location is the cell inner membrane. Its function is as follows. Essential cell division protein. May link together the upstream cell division proteins, which are predominantly cytoplasmic, with the downstream cell division proteins, which are predominantly periplasmic. This chain is Cell division protein FtsB, found in Methylobacillus flagellatus (strain ATCC 51484 / DSM 6875 / VKM B-1610 / KT).